A 418-amino-acid polypeptide reads, in one-letter code: Beta-2 adrenergic receptor (418 aa).

At 1–34 (MGQPGNRSVFLLAPNGSHAPDQDVPQERDEAWVV) the chain is on the extracellular side. N-linked (GlcNAc...) asparagine glycosylation is found at N6 and N15. The helical transmembrane segment at 35–58 (GMAIVMSLIVLAIVFGNVLVITAI) threads the bilayer. Residues 59–71 (AKFERLQTVTNYF) lie on the Cytoplasmic side of the membrane. The helical transmembrane segment at 72 to 95 (ITSLACADLVMGLAVVPFGASHIL) threads the bilayer. Topologically, residues 96–106 (MKMWTFGSFWC) are extracellular. Disulfide bonds link C106-C191 and C184-C190. The helical transmembrane segment at 107–129 (EFWISIDVLCVTASIETLCVIAV) threads the bilayer. Topologically, residues 130–150 (DRYLAITSPFKYQCLLTKNKA) are cytoplasmic. Phosphotyrosine is present on Y141. The chain crosses the membrane as a helical span at residues 151 to 174 (RVVILMVWVVSGLISFLPIKMHWY). Residues 175-196 (QATHREALNCYAEEACCDFFTN) are Extracellular-facing. A helical membrane pass occupies residues 197–220 (QPYAIASSIVSFYLPLVVMVFVYS). Residues 221 to 274 (RVFQVARRQLQKIDKSEGRFHAQNLSQAEQDGRSGPGHRRSSKFCLKEHKALKT) lie on the Cytoplasmic side of the membrane. S246 bears the Phosphoserine mark. Residues S261 and S262 each carry the phosphoserine; by PKA modification. The S-palmitoyl cysteine moiety is linked to residue C265. A helical transmembrane segment spans residues 275-298 (LGIIMGTFTLCWLPFFIVNIVHGI). Residues 299–305 (HDNLIPK) lie on the Extracellular side of the membrane. The helical transmembrane segment at 306–329 (EVYILLNWVGYVNSAFNPLIYCRS) threads the bilayer. Residues 330–418 (PDFRMAFQEL…RNCSTNDSML (89 aa)) are Cytoplasmic-facing. C341 carries the S-palmitoyl cysteine lipid modification. Phosphoserine; by PKA occurs at positions 345 and 346. Phosphoserine; by BARK occurs at positions 355 and 356. The disordered stretch occupies residues 381 to 418 (RLCEDAPGPEGCAHRQGTVPDDSTDSQGRNCSTNDSML). P387 and P400 each carry 4-hydroxyproline. A compositionally biased stretch (polar residues) spans 405-418 (DSQGRNCSTNDSML). The PDZ-binding signature appears at 415 to 418 (DSML).

It belongs to the G-protein coupled receptor 1 family. Adrenergic receptor subfamily. ADRB2 sub-subfamily. As to quaternary structure, binds NHERF1 and GPRASP1. Interacts with ARRB1 and ARRB2. Interacts with SRC. Interacts with USP20 and USP33. Interacts with VHL; the interaction, which is increased on hydroxylation of ADRB2, ubiquitinates ADRB2 leading to its degradation. Interacts with EGLN3; the interaction hydroxylates ADRB2 facilitating VHL-E3 ligase-mediated ubiquitination. Interacts (via PDZ-binding motif) with SNX27 (via PDZ domain); the interaction is required when endocytosed to prevent degradation in lysosomes and promote recycling to the plasma membrane. Interacts with CNIH4. Interacts with ARRDC3. Interacts with NEDD4. Interacts with MARCHF2. In terms of processing, palmitoylated; may reduce accessibility of Ser-345 and Ser-346 by anchoring Cys-341 to the plasma membrane. Agonist stimulation promotes depalmitoylation and further allows Ser-345 and Ser-346 phosphorylation. Phosphorylated by PKA and BARK upon agonist stimulation, which mediates homologous desensitization of the receptor. PKA-mediated phosphorylation seems to facilitate phosphorylation by BARK. Post-translationally, phosphorylation of Tyr-141 is induced by insulin and leads to supersensitization of the receptor. In terms of processing, polyubiquitinated. Agonist-induced ubiquitination leads to sort internalized receptors to the lysosomes for degradation. Deubiquitination by USP20 and USP33, leads to ADRB2 recycling and resensitization after prolonged agonist stimulation. USP20 and USP33 are constitutively associated and are dissociated immediately after agonist stimulation. Ubiquitination by the VHL-E3 ligase complex is oxygen-dependent. Hydroxylation by EGLN3 occurs only under normoxia and increases the interaction with VHL and the subsequent ubiquitination and degradation of ADRB2. Post-translationally, palmitoylated. Mainly palmitoylated at Cys-341. Palmitoylation may reduce accessibility of phosphorylation sites by anchoring the receptor to the plasma membrane. Agonist stimulation promotes depalmitoylation and further allows Ser-345 and Ser-346 phosphorylation. Also undergoes transient, ligand-induced palmitoylation at Cys-265 probably by ZDHHC9, ZDHHC14 and ZDHHC18 within the Golgi. Palmitoylation at Cys-265 requires phosphorylation by PKA and receptor internalization and stabilizes the receptor. Could be depalmitoylated by LYPLA1 at the plasma membrane. Expressed in heart, liver, lung, skeletal muscle and subcutaneous adipose tissue.

The protein resides in the cell membrane. It is found in the early endosome. It localises to the golgi apparatus. Its function is as follows. Beta-adrenergic receptors mediate the catecholamine-induced activation of adenylate cyclase through the action of G proteins. The beta-2-adrenergic receptor binds epinephrine with an approximately 30-fold greater affinity than it does norepinephrine. This chain is Beta-2 adrenergic receptor (ADRB2), found in Sus scrofa (Pig).